Here is a 351-residue protein sequence, read N- to C-terminus: Magnesium-protoporphyrin IX monomethyl ester [oxidative] cyclase 1 (351 aa).

Belongs to the AcsF family. The cofactor is Fe cation.

It carries out the reaction Mg-protoporphyrin IX 13-monomethyl ester + 3 NADPH + 3 O2 + 2 H(+) = 3,8-divinyl protochlorophyllide a + 3 NADP(+) + 5 H2O. It functions in the pathway porphyrin-containing compound metabolism; chlorophyll biosynthesis (light-independent). Catalyzes the formation of the isocyclic ring in chlorophyll biosynthesis. Mediates the cyclase reaction, which results in the formation of divinylprotochlorophyllide (Pchlide) characteristic of all chlorophylls from magnesium-protoporphyrin IX 13-monomethyl ester (MgPMME). The polypeptide is Magnesium-protoporphyrin IX monomethyl ester [oxidative] cyclase 1 (Nostoc sp. (strain PCC 7120 / SAG 25.82 / UTEX 2576)).